A 388-amino-acid chain; its full sequence is Succinate--CoA ligase [ADP-forming] subunit beta (388 aa).

Residues 9 to 244 enclose the ATP-grasp domain; the sequence is KQLFARYGMP…PSQEDAREAH (236 aa). ATP contacts are provided by residues Lys-46, 53–55, Glu-99, Thr-102, and Glu-107; that span reads GRG. The Mg(2+) site is built by Asn-199 and Asp-213. Substrate-binding positions include Asn-264 and 321–323; that span reads GIV.

Belongs to the succinate/malate CoA ligase beta subunit family. Heterotetramer of two alpha and two beta subunits. The cofactor is Mg(2+).

It catalyses the reaction succinate + ATP + CoA = succinyl-CoA + ADP + phosphate. It carries out the reaction GTP + succinate + CoA = succinyl-CoA + GDP + phosphate. The protein operates within carbohydrate metabolism; tricarboxylic acid cycle; succinate from succinyl-CoA (ligase route): step 1/1. In terms of biological role, succinyl-CoA synthetase functions in the citric acid cycle (TCA), coupling the hydrolysis of succinyl-CoA to the synthesis of either ATP or GTP and thus represents the only step of substrate-level phosphorylation in the TCA. The beta subunit provides nucleotide specificity of the enzyme and binds the substrate succinate, while the binding sites for coenzyme A and phosphate are found in the alpha subunit. This Yersinia pseudotuberculosis serotype O:1b (strain IP 31758) protein is Succinate--CoA ligase [ADP-forming] subunit beta.